We begin with the raw amino-acid sequence, 273 residues long: HTH-type transcriptional activator RhaS (273 aa).

The HTH araC/xylS-type domain maps to 174 to 272 (YQLLDWLQNN…SQSPRDLRSQ (99 aa)). DNA-binding regions (H-T-H motif) lie at residues 191–212 (PELA…KNKT) and 239–262 (VTDI…KREF).

As to quaternary structure, binds DNA as a dimer.

It is found in the cytoplasm. Functionally, activates expression of the rhaBAD and rhaT operons. This is HTH-type transcriptional activator RhaS from Yersinia pseudotuberculosis serotype O:1b (strain IP 31758).